A 315-amino-acid chain; its full sequence is Neuroguidin (315 aa).

A2 is subject to N-acetylalanine. Residues 7 to 41 are a coiled coil; it reads LESDVSSSITLLKNLQEQVMAVTAQIQALTTKVRA. Residues 41-174 form a necessary for interaction with EIF4E region; sequence AGTYSTEKGL…KGSAKKYVPP (134 aa). A phosphoserine mark is found at S121, S142, and S143. A disordered region spans residues 123 to 190; it reads SENDPLRFKP…YDETEAEREQ (68 aa). Over residues 144–155 the composition is skewed to acidic residues; sequence EDEEESEAEEGQ. The segment covering 180-190 has biased composition (basic and acidic residues); sequence HYDETEAEREQ. A coiled-coil region spans residues 181-203; the sequence is YDETEAEREQKRLEKAKRRALSS. Phosphoserine occurs at positions 204 and 214. Basic and acidic residues-rich tracts occupy residues 212-225 and 232-241; these read QYSDAPEEIRDARH and SQEDQHRVNY. Disordered regions lie at residues 212 to 243 and 284 to 315; these read QYSDAPEEIRDARHPHVTRQSQEDQHRVNYEE and GTAHLDEDQNPVKKRKKLPKKGRKKKGFRRRW. Basic residues predominate over residues 295 to 315; the sequence is VKKRKKLPKKGRKKKGFRRRW.

It belongs to the SAS10 family. In terms of assembly, interacts with CPEB1 and EIF4E. In terms of tissue distribution, expressed in testis, ovary, spleen, kidney, hippocampus and cerebellum (at protein level). Expressed in testis, ovary, spleen, kidney, brain.

It localises to the nucleus. The protein localises to the nucleolus. Its subcellular location is the chromosome. It is found in the centromere. The protein resides in the cytoplasm. It localises to the cell projection. The protein localises to the axon. Its subcellular location is the dendrite. It is found in the filopodium. In terms of biological role, part of the small subunit (SSU) processome, first precursor of the small eukaryotic ribosomal subunit. During the assembly of the SSU processome in the nucleolus, many ribosome biogenesis factors, an RNA chaperone and ribosomal proteins associate with the nascent pre-rRNA and work in concert to generate RNA folding, modifications, rearrangements and cleavage as well as targeted degradation of pre-ribosomal RNA by the RNA exosome. Its dissociation from the complex determines the transition from state pre-A1 to state pre-A1*. Inhibits mRNA translation in a cytoplasmic polyadenylation element (CPE)-dependent manner. The protein is Neuroguidin (Ngdn) of Mus musculus (Mouse).